A 647-amino-acid polypeptide reads, in one-letter code: Chaperone protein DnaK (647 aa).

Thr-198 carries the post-translational modification Phosphothreonine; by autocatalysis. Positions 603–647 (EQAQGAGGAQGFDPNAFQGGDAGQQQKADDGVVDAEFTEVKDDKK) are disordered. A compositionally biased stretch (low complexity) spans 618–628 (AFQGGDAGQQQ).

This sequence belongs to the heat shock protein 70 family.

Its function is as follows. Acts as a chaperone. The chain is Chaperone protein DnaK from Acinetobacter baylyi (strain ATCC 33305 / BD413 / ADP1).